We begin with the raw amino-acid sequence, 252 residues long: D-aminoacyl-tRNA deacylase (252 aa).

It belongs to the DtdA deacylase family. As to quaternary structure, monomer. Zn(2+) serves as cofactor.

It carries out the reaction a D-aminoacyl-tRNA + H2O = a tRNA + a D-alpha-amino acid + H(+). The catalysed reaction is glycyl-tRNA(Ala) + H2O = tRNA(Ala) + glycine + H(+). Functionally, D-aminoacyl-tRNA deacylase with broad substrate specificity. By recycling D-aminoacyl-tRNA to D-amino acids and free tRNA molecules, this enzyme counteracts the toxicity associated with the formation of D-aminoacyl-tRNA entities in vivo. The polypeptide is D-aminoacyl-tRNA deacylase (Pyrobaculum arsenaticum (strain DSM 13514 / JCM 11321 / PZ6)).